A 649-amino-acid chain; its full sequence is Stress-70 protein, mitochondrial (649 aa).

A mitochondrion-targeting transit peptide spans 1–46 (MISASRAAAARLVGAAASRGPTAARHKDGWNGLSHEAFRIVSRRDY). The interaction with NFS1 stretch occupies residues 1-432 (MISASRAAAA…IQGGVLAGDV (432 aa)). Threonine 63 and asparagine 64 together coordinate ADP. The tract at residues 63–431 (TNSCVAVMEG…AIQGGVLAGD (369 aa)) is nucleotide-binding domain (NBD). At lysine 76 the chain carries N6-acetyllysine. Threonine 87 is subject to Phosphothreonine. 2 positions are modified to N6-acetyllysine; alternate: lysine 135 and lysine 138. N6-succinyllysine; alternate is present on residues lysine 135 and lysine 138. Lysine 143 is subject to N6-acetyllysine. The residue at position 206 (lysine 206) is an N6-acetyllysine; alternate. Lysine 206 is modified (N6-succinyllysine; alternate). At lysine 206 the chain carries N6-malonyllysine; alternate. N6-acetyllysine occurs at positions 234 and 288. Residue lysine 300 is modified to N6-acetyllysine; alternate. Lysine 300 carries the post-translational modification N6-succinyllysine; alternate. ADP-binding residues include glutamate 313, lysine 316, and serine 320. Lysine 368 is subject to N6-succinyllysine. 2 residues coordinate ADP: glycine 388 and arginine 391. The residue at position 394 (lysine 394) is an N6-succinyllysine. Serine 408 carries the phosphoserine modification. Residues 432–441 (VTDVLLLDVT) form an interdomain linker region. N6-acetyllysine; alternate is present on residues lysine 565, lysine 598, and lysine 638. Lysine 565, lysine 598, and lysine 638 each carry N6-succinyllysine; alternate.

Belongs to the heat shock protein 70 family. In terms of assembly, interacts strongly with the intermediate form of FXN and weakly with its mature form. Interacts with HSCB. Associates with the mitochondrial contact site and cristae organizing system (MICOS) complex, composed of at least MICOS10/MIC10, CHCHD3/MIC19, CHCHD6/MIC25, APOOL/MIC27, IMMT/MIC60, APOO/MIC23/MIC26 and QIL1/MIC13. This complex was also known under the names MINOS or MitOS complex. The MICOS complex associates with mitochondrial outer membrane proteins SAMM50, MTX1, MTX2 and DNAJC11, mitochondrial inner membrane protein TMEM11 and with HSPA9. Interacts with DNLZ, the interaction is required to prevent self-aggregation. Interacts with TESPA1. Interacts with PDPN. Interacts with NFU1, NFS1 and ISCU. Interacts with TP53; the interaction promotes TP53 degradation. Interacts (via SBD domain) with UBXN2A; the interaction with UBXN2A inhibits HSPA9/MOT-2 interaction with and degradation of TP53, thereby promotes TP53 translocation to the nucleus. Interacts with ITPR1 AND VDAC1; this interaction couples ITPR1 to VDAC1. Component of the TIM23 mitochondrial inner membrane pre-sequence translocase complex.

It is found in the mitochondrion. Its subcellular location is the nucleus. The protein localises to the nucleolus. The protein resides in the cytoplasm. It localises to the mitochondrion matrix. It catalyses the reaction ATP + H2O = ADP + phosphate + H(+). The chaperone activity is regulated by ATP-induced allosteric coupling of the nucleotide-binding (NBD) and substrate-binding (SBD) domains. ATP binding in the NBD leads to a conformational change in the NBD, which is transferred through the interdomain linker (IDL) to the substrate-binding domain (SBD). This elicits a reduced substrate affinity and a faster substrate exchange rate. Upon hydrolysis of ATP to ADP, the protein undergoes a conformational change that increases its affinity for substrate proteins. It cycles through repeated phases of ATP hydrolysis and nucleotide exchange, facilitating repeated cycles of substrate binding and release. Functions in collaboration with co-chaperones. Functions with the co-chaperone, DNLZ, to maintain solubility and regulate ATP hydrolysis. Nucleotide exchange factors, GRPEL1 and GRPEL2, accelerate nucleotide exchange. Functionally, mitochondrial chaperone that plays a key role in mitochondrial protein import, folding, and assembly. Plays an essential role in the protein quality control system, the correct folding of proteins, the re-folding of misfolded proteins, and the targeting of proteins for subsequent degradation. These processes are achieved through cycles of ATP binding, ATP hydrolysis, and ADP release, mediated by co-chaperones. In mitochondria, it associates with the TIM (translocase of the inner membrane) protein complex to assist in the import and folding of mitochondrial proteins. Plays an important role in mitochondrial iron-sulfur cluster (ISC) biogenesis, interacts with and stabilizes ISC cluster assembly proteins FXN, NFU1, NFS1 and ISCU. Regulates erythropoiesis via stabilization of ISC assembly. Regulates mitochondrial calcium-dependent apoptosis by coupling two calcium channels, ITPR1 and VDAC1, at the mitochondria-associated endoplasmic reticulum (ER) membrane to facilitate calcium transport from the ER lumen to the mitochondria intermembrane space, providing calcium for the downstream calcium channel MCU, which releases it into the mitochondrial matrix. Although primarily located in the mitochondria, it is also found in other cellular compartments. In the cytosol, it associates with proteins involved in signaling, apoptosis, or senescence. It may play a role in cell cycle regulation via its interaction with and promotion of degradation of TP53. May play a role in the control of cell proliferation and cellular aging. Protects against reactive oxygen species (ROS). Extracellular HSPA9 plays a cytoprotective role by preventing cell lysis following immune attack by the membrane attack complex by disrupting formation of the complex. The chain is Stress-70 protein, mitochondrial from Canis lupus familiaris (Dog).